We begin with the raw amino-acid sequence, 174 residues long: Large ribosomal subunit protein uL10 (174 aa).

It belongs to the universal ribosomal protein uL10 family. In terms of assembly, part of the ribosomal stalk of the 50S ribosomal subunit. The N-terminus interacts with L11 and the large rRNA to form the base of the stalk. The C-terminus forms an elongated spine to which L12 dimers bind in a sequential fashion forming a multimeric L10(L12)X complex.

Its function is as follows. Forms part of the ribosomal stalk, playing a central role in the interaction of the ribosome with GTP-bound translation factors. The chain is Large ribosomal subunit protein uL10 from Anaeromyxobacter sp. (strain Fw109-5).